The sequence spans 464 residues: 3-isopropylmalate dehydratase large subunit (464 aa).

Positions 337, 397, and 400 each coordinate [4Fe-4S] cluster.

The protein belongs to the aconitase/IPM isomerase family. LeuC type 1 subfamily. As to quaternary structure, heterodimer of LeuC and LeuD. [4Fe-4S] cluster is required as a cofactor.

The enzyme catalyses (2R,3S)-3-isopropylmalate = (2S)-2-isopropylmalate. The protein operates within amino-acid biosynthesis; L-leucine biosynthesis; L-leucine from 3-methyl-2-oxobutanoate: step 2/4. Functionally, catalyzes the isomerization between 2-isopropylmalate and 3-isopropylmalate, via the formation of 2-isopropylmaleate. The polypeptide is 3-isopropylmalate dehydratase large subunit (Bacillus cereus (strain G9842)).